Here is a 117-residue protein sequence, read N- to C-terminus: 3',5'-cyclic-AMP phosphodiesterase 4A (117 aa).

Residues 42-79 (KQNEVEIPSPTMKDREPQEAPRQRPCQQLPPPVPHLQP) form a disordered region. Basic and acidic residues predominate over residues 53-63 (MKDREPQEAPR). Residues 78–117 (QPMSQITGVKRLSHNSGLNNASIPRFGVKTDQEELLAQEL) are catalytic.

The protein belongs to the cyclic nucleotide phosphodiesterase family. PDE4 subfamily. As to quaternary structure, interacts with LYN (via SH3 domain). Interacts with ARRB2. Requires Zn(2+) as cofactor. It depends on Mg(2+) as a cofactor. Mn(2+) serves as cofactor. Proteolytically cleaved by CASP3.

It localises to the cytoplasm. The protein localises to the cytosol. The protein resides in the membrane. It carries out the reaction 3',5'-cyclic AMP + H2O = AMP + H(+). It participates in purine metabolism; 3',5'-cyclic AMP degradation; AMP from 3',5'-cyclic AMP: step 1/1. Functionally, hydrolyzes the second messenger 3',5'-cyclic AMP (cAMP), which is a key regulator of many important physiological processes. The polypeptide is 3',5'-cyclic-AMP phosphodiesterase 4A (PDE4A) (Cavia porcellus (Guinea pig)).